The primary structure comprises 206 residues: Ribosomal RNA large subunit methyltransferase E (206 aa).

S-adenosyl-L-methionine is bound by residues Gly60, Trp62, Asp80, Asn96, and Asp121. Lys161 acts as the Proton acceptor in catalysis.

This sequence belongs to the class I-like SAM-binding methyltransferase superfamily. RNA methyltransferase RlmE family.

It is found in the cytoplasm. The catalysed reaction is uridine(2552) in 23S rRNA + S-adenosyl-L-methionine = 2'-O-methyluridine(2552) in 23S rRNA + S-adenosyl-L-homocysteine + H(+). Specifically methylates the uridine in position 2552 of 23S rRNA at the 2'-O position of the ribose in the fully assembled 50S ribosomal subunit. The polypeptide is Ribosomal RNA large subunit methyltransferase E (Francisella philomiragia subsp. philomiragia (strain ATCC 25017 / CCUG 19701 / FSC 153 / O#319-036)).